The following is a 970-amino-acid chain: Rho GTPase-activating protein gacK (970 aa).

The N-terminal stretch at 1-20 is a signal peptide; the sequence is MTLVYEKSSFVLIMAQIAEA. Disordered stretches follow at residues 30–49, 258–285, 312–446, 487–550, and 860–886; these read SNDL…SAAI, STCS…INQN, EITI…FSPT, STSN…NNNN, and TASS…NDDP. 2 stretches are compositionally biased toward low complexity: residues 35–49 and 258–269; these read STSA…SAAI and STCSLSSNASNN. Pro residues predominate over residues 321 to 333; it reads IPLPPQSSSPPPT. The span at 334-383 shows a compositional bias: low complexity; the sequence is RNNQSSPSPSSPQQQNIMPTPPSTSLTPPQSPTLSPSSSTHSTPTQTTTT. Residues 392-406 are compositionally biased toward polar residues; sequence PSTISQNNARKTQIP. Positions 407-426 are enriched in low complexity; the sequence is TTTTTTTTTTTTTSTTSTTS. Polar residues predominate over residues 427-446; it reads PNPVVNNKNLNTPSSSFSPT. A Rho-GAP domain is found at 754–970; that stretch reads IEDSELVEDN…LELIQFNKSL (217 aa). Positions 860-885 are enriched in low complexity; the sequence is TASSAATANSSSSGSGNGNSSPNNDD.

It is found in the cytoplasm. Functionally, rho GTPase-activating protein involved in the signal transduction pathway. This chain is Rho GTPase-activating protein gacK (gacK), found in Dictyostelium discoideum (Social amoeba).